The sequence spans 1045 residues: Translation initiation factor IF-2 (1045 aa).

Disordered stretches follow at residues 1 to 169 (MSDE…AQAP) and 184 to 451 (QAPA…RGGP). Gly residues predominate over residues 83–94 (SGGGGSSAGGLS). The span at 103–123 (RAIEAAREHQERQAAERRAAE) shows a compositional bias: basic and acidic residues. Low complexity predominate over residues 124-151 (ARAASEAAAARDAAAKSAAAAKAAAAPA). Pro residues predominate over residues 152–163 (PEAPAAPAPTPA). Positions 184–199 (QAPAAPVAAAPAAPRA) are enriched in low complexity. Basic and acidic residues-rich tracts occupy residues 227 to 237 (EPSRDRRDDRS) and 302 to 323 (RNDRPQGDRPQGDRPQGDRPQG). Over residues 338 to 348 (RPAPGARPGPG) the composition is skewed to pro residues. Positions 352 to 363 (GARPGVPASAPA) are enriched in low complexity. Basic and acidic residues-rich tracts occupy residues 381 to 393 (VGRKPEEDDDRRK) and 438 to 450 (RAREREKEKRRGG). One can recognise a tr-type G domain in the interval 540-710 (PRPPVVTVMG…LLLAEVMDLK (171 aa)). Residues 549 to 556 (GHVDHGKT) are G1. 549–556 (GHVDHGKT) contacts GTP. The tract at residues 574-578 (GITQH) is G2. The tract at residues 596 to 599 (DTPG) is G3. GTP-binding positions include 596–600 (DTPGH) and 650–653 (NKMD). Residues 650 to 653 (NKMD) are G4. The interval 686–688 (SAK) is G5.

The protein belongs to the TRAFAC class translation factor GTPase superfamily. Classic translation factor GTPase family. IF-2 subfamily.

It is found in the cytoplasm. Functionally, one of the essential components for the initiation of protein synthesis. Protects formylmethionyl-tRNA from spontaneous hydrolysis and promotes its binding to the 30S ribosomal subunits. Also involved in the hydrolysis of GTP during the formation of the 70S ribosomal complex. This Caulobacter sp. (strain K31) protein is Translation initiation factor IF-2.